Here is a 479-residue protein sequence, read N- to C-terminus: Probable periplasmic serine endoprotease DegP-like (479 aa).

Residues 1-27 (MSIPRMKSYFSLIAAVLMLGQVATAQA) form the signal peptide. The disordered stretch occupies residues 77–99 (LERSMPPGSRPPGAGKGDRQRET). Active-site charge relay system residues include H119, D149, and S222. Substrate-binding positions include 220-222 (GNS) and 277-281 (LGVVI). 2 PDZ domains span residues 266-357 (LKAS…IRDG) and 363-468 (TVTV…LRQG).

This sequence belongs to the peptidase S1C family.

The protein localises to the periplasm. It carries out the reaction Acts on substrates that are at least partially unfolded. The cleavage site P1 residue is normally between a pair of hydrophobic residues, such as Val-|-Val.. Its function is as follows. Might be efficient in the degradation of transiently denatured and unfolded proteins which accumulate in the periplasm following stress conditions. The chain is Probable periplasmic serine endoprotease DegP-like (mucD) from Pseudomonas savastanoi pv. phaseolicola (strain 1448A / Race 6) (Pseudomonas syringae pv. phaseolicola (strain 1448A / Race 6)).